We begin with the raw amino-acid sequence, 439 residues long: UPF0597 protein Dalk_4447 (439 aa).

This sequence belongs to the UPF0597 family.

The chain is UPF0597 protein Dalk_4447 from Desulfatibacillum aliphaticivorans.